The chain runs to 452 residues: Pup--protein ligase (452 aa).

E9 contributes to the Mg(2+) binding site. Residue R53 coordinates ATP. A Mg(2+)-binding site is contributed by Y55. Catalysis depends on D57, which acts as the Proton acceptor. Residue E63 participates in Mg(2+) binding. ATP is bound by residues T66 and W419.

The protein belongs to the Pup ligase/Pup deamidase family. Pup-conjugating enzyme subfamily.

It catalyses the reaction ATP + [prokaryotic ubiquitin-like protein]-L-glutamate + [protein]-L-lysine = ADP + phosphate + N(6)-([prokaryotic ubiquitin-like protein]-gamma-L-glutamyl)-[protein]-L-lysine.. It functions in the pathway protein degradation; proteasomal Pup-dependent pathway. The protein operates within protein modification; protein pupylation. Catalyzes the covalent attachment of the prokaryotic ubiquitin-like protein modifier Pup to the proteasomal substrate proteins, thereby targeting them for proteasomal degradation. This tagging system is termed pupylation. The ligation reaction involves the side-chain carboxylate of the C-terminal glutamate of Pup and the side-chain amino group of a substrate lysine. The polypeptide is Pup--protein ligase (Salinispora tropica (strain ATCC BAA-916 / DSM 44818 / JCM 13857 / NBRC 105044 / CNB-440)).